The chain runs to 377 residues: Opsin-2 (377 aa).

The Extracellular segment spans residues M1–A57. An N-linked (GlcNAc...) asparagine glycan is attached at N3. The chain crosses the membrane as a helical span at residues L58–F78. Residues S79–N89 lie on the Cytoplasmic side of the membrane. Residues F90 to I110 traverse the membrane as a helical segment. Residues Y111–Q126 lie on the Extracellular side of the membrane. A disulfide bond links C125 and C202. The chain crosses the membrane as a helical span at residues I127–I146. Residues A147–K166 lie on the Cytoplasmic side of the membrane. A helical transmembrane segment spans residues V167–L187. At K188–K214 the chain is on the extracellular side. The helical transmembrane segment at L215–F235 threads the bilayer. Topologically, residues Y236–T283 are cytoplasmic. The helical transmembrane segment at V284 to F304 threads the bilayer. The Extracellular segment spans residues G305–V314. A helical membrane pass occupies residues T315–I335. Residues R336–A377 lie on the Cytoplasmic side of the membrane. Residues E355–A377 are disordered. Residues S361–A377 are compositionally biased toward low complexity.

Belongs to the G-protein coupled receptor 1 family. Opsin subfamily. As to expression, in the retina, expression is essentially uniformly distributed, but a higher level is seen in the dorsal region of the retina and in the dorsal rim retinulae.

The protein resides in the membrane. Functionally, visual pigments are the light-absorbing molecules that mediate vision. They consist of an apoprotein, opsin, covalently linked to cis-retinal. May play a role in photoperiodic photoreception. The protein is Opsin-2 (OP2) of Manduca sexta (Tobacco hawkmoth).